A 222-amino-acid chain; its full sequence is UPF0758 protein YPN_3801 (222 aa).

An MPN domain is found at 100 to 222 (VLLNPGITQK…CVSFAERGWL (123 aa)). Residues histidine 171, histidine 173, and aspartate 184 each coordinate Zn(2+). A JAMM motif motif is present at residues 171–184 (HNHPSGKAEPSQAD).

The protein belongs to the UPF0758 family. YicR subfamily.

The sequence is that of UPF0758 protein YPN_3801 from Yersinia pestis bv. Antiqua (strain Nepal516).